A 297-amino-acid polypeptide reads, in one-letter code: GTP cyclohydrolase FolE2 (297 aa).

2 disordered regions span residues 1-21 and 180-207; these read MTHA…SERD and IRAE…RERP.

It belongs to the GTP cyclohydrolase IV family.

It catalyses the reaction GTP + H2O = 7,8-dihydroneopterin 3'-triphosphate + formate + H(+). The protein operates within cofactor biosynthesis; 7,8-dihydroneopterin triphosphate biosynthesis; 7,8-dihydroneopterin triphosphate from GTP: step 1/1. Its function is as follows. Converts GTP to 7,8-dihydroneopterin triphosphate. The chain is GTP cyclohydrolase FolE2 from Methylibium petroleiphilum (strain ATCC BAA-1232 / LMG 22953 / PM1).